Consider the following 406-residue polypeptide: Arginine biosynthesis bifunctional protein ArgJ (406 aa).

The substrate site is built by threonine 156, lysine 182, threonine 193, glutamate 279, asparagine 401, and threonine 406. Threonine 193 functions as the Nucleophile in the catalytic mechanism.

It belongs to the ArgJ family. Heterotetramer of two alpha and two beta chains.

It localises to the cytoplasm. It carries out the reaction N(2)-acetyl-L-ornithine + L-glutamate = N-acetyl-L-glutamate + L-ornithine. It catalyses the reaction L-glutamate + acetyl-CoA = N-acetyl-L-glutamate + CoA + H(+). It functions in the pathway amino-acid biosynthesis; L-arginine biosynthesis; L-ornithine and N-acetyl-L-glutamate from L-glutamate and N(2)-acetyl-L-ornithine (cyclic): step 1/1. The protein operates within amino-acid biosynthesis; L-arginine biosynthesis; N(2)-acetyl-L-ornithine from L-glutamate: step 1/4. Feedback inhibition by L-arginine. Catalyzes two activities which are involved in the cyclic version of arginine biosynthesis: the synthesis of N-acetylglutamate from glutamate and acetyl-CoA as the acetyl donor, and of ornithine by transacetylation between N(2)-acetylornithine and glutamate. In Bacillus amyloliquefaciens (Bacillus velezensis), this protein is Arginine biosynthesis bifunctional protein ArgJ.